We begin with the raw amino-acid sequence, 379 residues long: MATEIAKHICCGIDCNNEADRLQCPKCLNDGVKSYFCGQECFRNSWNIHKHLHRPPNVEKREDGTYNPFPKFHFAGSLKPVYPLSPIRKVPPHIKRPDYAKTGVSRSEQIEGRSFKLKRLTPKEQEGMRKVCRLGREVLDAAAAAVRPGTTTDELDSIVHNACIERDCFPSTLNYYAFPKSVCTSVNEIICHGIPDQRPLEDGDIVNIDVSLYHNGFHGDLNETYYVGDKAKANPDLVCLVENTRIALDKAIAAVKPGVLFQEFGNIIEKHTNSITEKQISVVRTYCGHGINQLFHCSPSIPHYSHNKAPGIARPGMTFTIEPMLTLGPARDITWPDDWTSSTASGRCSAQFEHTLLVTETGCEVLTARLPNSPGGPLK.

The C6H2-type zinc finger occupies 7 to 60 (KHICCGIDCNNEADRLQCPKCLNDGVKSYFCGQECFRNSWNIHKHLHRPPNVEK). Zn(2+) contacts are provided by Cys10, Cys15, Cys24, Cys27, Cys37, Cys41, His49, and His53. His192 provides a ligand contact to a protein. Positions 209, 220, and 289 each coordinate Zn(2+). His296 lines the a protein pocket. Zn(2+) is bound by residues Glu322 and Glu353. Phosphoserine is present on Ser373.

It belongs to the peptidase M24A family. Methionine aminopeptidase type 1 subfamily. In terms of assembly, associates with the 60S ribosomal subunit of the 80S translational complex. Zn(2+) is required as a cofactor. Co(2+) serves as cofactor. It depends on Mn(2+) as a cofactor. Requires Fe(2+) as cofactor.

The protein resides in the cytoplasm. It is found in the nucleus. The protein localises to the nucleolus. The catalysed reaction is Release of N-terminal amino acids, preferentially methionine, from peptides and arylamides.. In terms of biological role, cotranslationally removes the N-terminal methionine from nascent proteins. The N-terminal methionine is often cleaved when the second residue in the primary sequence is small and uncharged (Met-Ala-, Cys, Gly, Pro, Ser, Thr, or Val). The chain is Methionine aminopeptidase 1 (fma1) from Schizosaccharomyces pombe (strain 972 / ATCC 24843) (Fission yeast).